The chain runs to 63 residues: Eumenitin VP1 (63 aa).

Residues 1–22 (MRGTSFILFAVVVILGFLHANA) form the signal peptide. 5 AXPX repeats span residues 22–25 (AEPL), 26–29 (ANPA), 32–35 (ANPD), 40–43 (ADPL), and 44–47 (ADPE). A propeptide spanning residues 23-48 (EPLANPAPLANPDPLANADPLADPEA) is cleaved from the precursor.

In terms of tissue distribution, expressed by the venom gland.

It localises to the secreted. The protein localises to the target cell membrane. In terms of biological role, antimicrobial peptide with activities against the fungi B.cinerea (MIC=5 uM) and C.albicans (MIC=100 uM), the Gram-negative bacterium E.coli (MIC=25 uM) and the Gram-positive bacterium S.aureus (MIC=100 uM). Shows cytolytic activity against insect cell lines. Has no hemolytic activity against human erythrocytes. In vivo, peptide injection in the vicinity of the head and thorax of lepidopteran larvae induces feeding disorder followed by death due to starvation. This is Eumenitin VP1 from Eumenes pomiformis (Potter wasp).